The chain runs to 357 residues: UDP-N-acetylglucosamine--N-acetylmuramyl-(pentapeptide) pyrophosphoryl-undecaprenol N-acetylglucosamine transferase (357 aa).

UDP-N-acetyl-alpha-D-glucosamine-binding positions include 13–15, Arg166, Ser196, and Gln291; that span reads SAG.

It belongs to the glycosyltransferase 28 family. MurG subfamily.

The protein resides in the cell membrane. The enzyme catalyses di-trans,octa-cis-undecaprenyl diphospho-N-acetyl-alpha-D-muramoyl-L-alanyl-D-glutamyl-meso-2,6-diaminopimeloyl-D-alanyl-D-alanine + UDP-N-acetyl-alpha-D-glucosamine = di-trans,octa-cis-undecaprenyl diphospho-[N-acetyl-alpha-D-glucosaminyl-(1-&gt;4)]-N-acetyl-alpha-D-muramoyl-L-alanyl-D-glutamyl-meso-2,6-diaminopimeloyl-D-alanyl-D-alanine + UDP + H(+). It participates in cell wall biogenesis; peptidoglycan biosynthesis. In terms of biological role, cell wall formation. Catalyzes the transfer of a GlcNAc subunit on undecaprenyl-pyrophosphoryl-MurNAc-pentapeptide (lipid intermediate I) to form undecaprenyl-pyrophosphoryl-MurNAc-(pentapeptide)GlcNAc (lipid intermediate II). The polypeptide is UDP-N-acetylglucosamine--N-acetylmuramyl-(pentapeptide) pyrophosphoryl-undecaprenol N-acetylglucosamine transferase (Clostridium perfringens (strain SM101 / Type A)).